A 162-amino-acid chain; its full sequence is NADH-quinone oxidoreductase subunit I (162 aa).

2 4Fe-4S ferredoxin-type domains span residues 52–82 (LRRYPNGEERCIACKLCEAICPAKAITIEAG) and 93–122 (TRYDIDMVKCIYCGFCQEACPVDAIVEGPN). [4Fe-4S] cluster-binding residues include C62, C65, C68, C72, C102, C105, C108, and C112.

This sequence belongs to the complex I 23 kDa subunit family. NDH-1 is composed of 14 different subunits. Subunits NuoA, H, J, K, L, M, N constitute the membrane sector of the complex. The cofactor is [4Fe-4S] cluster.

It is found in the cell inner membrane. The enzyme catalyses a quinone + NADH + 5 H(+)(in) = a quinol + NAD(+) + 4 H(+)(out). In terms of biological role, NDH-1 shuttles electrons from NADH, via FMN and iron-sulfur (Fe-S) centers, to quinones in the respiratory chain. The immediate electron acceptor for the enzyme in this species is believed to be ubiquinone. Couples the redox reaction to proton translocation (for every two electrons transferred, four hydrogen ions are translocated across the cytoplasmic membrane), and thus conserves the redox energy in a proton gradient. This Beijerinckia indica subsp. indica (strain ATCC 9039 / DSM 1715 / NCIMB 8712) protein is NADH-quinone oxidoreductase subunit I.